The chain runs to 353 residues: C2 calcium-dependent domain-containing protein 4D (353 aa).

A disordered region spans residues 135–191 (CRAPDSDTASSPDSSPFGSPRPGLGRRRVSRPHSLSPEKASSADTSPHSPRRAGPPT). Residues 140–150 (SDTASSPDSSP) show a composition bias toward low complexity. The C2 domain occupies 217 to 343 (RGGQLRLSTE…PPLGGGLGPG (127 aa)).

The polypeptide is C2 calcium-dependent domain-containing protein 4D (C2CD4D) (Homo sapiens (Human)).